The chain runs to 406 residues: Lissencephaly-1 homolog (406 aa).

The region spanning 7-39 is the LisH domain; the sequence is QREELNKAIADYLRSNGYESALEAFQKEAEMPG. Positions 54 to 81 form a coiled coil; it reads TSVIRLQKKVMDLEAKLAEAEKEFQSGG. Basic and acidic residues predominate over residues 74–89; the sequence is EKEFQSGGPNKKERSP. Positions 74-99 are disordered; that stretch reads EKEFQSGGPNKKERSPSEWIPRPPAR. WD repeat units lie at residues 104-145, 146-185, 188-227, 230-269, 272-329, 332-371, and 374-406; these read GHRS…RTLK, GHTD…NIKT, GHDH…CVKT, GHRE…CKAE, EHEH…CIMT, GHDN…CQKT, and AHQH…WECR.

The protein belongs to the WD repeat LIS1/nudF family.

Its subcellular location is the cytoplasm. The protein localises to the cytoskeleton. It localises to the microtubule organizing center. It is found in the centrosome. Its function is as follows. Positively regulates the activity of the minus-end directed microtubule motor protein dynein. May enhance dynein-mediated microtubule sliding by targeting dynein to the microtubule plus end. Required for several dynein- and microtubule-dependent processes. The protein is Lissencephaly-1 homolog of Branchiostoma floridae (Florida lancelet).